Here is a 320-residue protein sequence, read N- to C-terminus: MSQAKTGILLANLGTPEAPTPAAVKRYLRQFLSDTRVVDTPRVLWWPLLRGVILPIRSPRVAKLYQSVWMEEGSPLMVYSRRQEKALAARLPDMPVALGMSYGKPSLESAVENLLSQDVEHIVVLALYPQYSCSTVAAVWDELARILATRRHIPGITFIRDYADDEMYIAALVNSARASFAKHGEPDLLLLSYHGIPQRYADEGDDYPQRCRDTTRELVSALGLPPEKVMMTFQSRFGREPWLTPYTDETLKMLGEKGVKHVQVMSPGFSADCLETLEEIAVQNREFFLEAGGTKYEYIPALNDSPEHIEMMVSLVTTRR.

2 residues coordinate Fe cation: H194 and E275.

This sequence belongs to the ferrochelatase family.

It localises to the cytoplasm. It catalyses the reaction heme b + 2 H(+) = protoporphyrin IX + Fe(2+). The protein operates within porphyrin-containing compound metabolism; protoheme biosynthesis; protoheme from protoporphyrin-IX: step 1/1. Its function is as follows. Catalyzes the ferrous insertion into protoporphyrin IX. The chain is Ferrochelatase from Enterobacter sp. (strain 638).